The primary structure comprises 962 residues: pH-response regulator protein palF/prr-3 (962 aa).

4 disordered regions span residues 1–43 (MGPF…DSST), 225–326 (APPK…THPS), 568–675 (TDSN…PDEN), and 689–962 (RLLP…RYER). Basic residues predominate over residues 237 to 246 (ISKRAKKKRP). 3 stretches are compositionally biased toward polar residues: residues 297–307 (GFSQAPRSVSH), 314–326 (SGDS…THPS), and 581–596 (PSLT…SNYV). Low complexity-rich tracts occupy residues 696–722 (PIAA…PDSS) and 738–747 (PTPAATPATA). Residues 793–805 (TEDKQELERRRLL) are compositionally biased toward basic and acidic residues. The span at 830-839 (AGPSGSRAGP) shows a compositional bias: low complexity. Over residues 840–849 (SAPPPAPPVA) the composition is skewed to pro residues. Residues 913 to 928 (PSSPVLAPASAFFPAS) are compositionally biased toward low complexity. Residues 929-949 (GSGNVHDSPREQGQQARSDSS) are compositionally biased toward polar residues.

The protein belongs to the arrestin family. PalF/RIM8 subfamily.

In terms of biological role, required for the proteolytic cleavage of the transcription factor pacc-1 in response to alkaline ambient pH. This is pH-response regulator protein palF/prr-3 (prr-3) from Neurospora crassa (strain ATCC 24698 / 74-OR23-1A / CBS 708.71 / DSM 1257 / FGSC 987).